The sequence spans 299 residues: Bifunctional protein FolD (299 aa).

Residues 168 to 170 (GRS), S193, and I234 each bind NADP(+).

This sequence belongs to the tetrahydrofolate dehydrogenase/cyclohydrolase family. Homodimer.

The enzyme catalyses (6R)-5,10-methylene-5,6,7,8-tetrahydrofolate + NADP(+) = (6R)-5,10-methenyltetrahydrofolate + NADPH. The catalysed reaction is (6R)-5,10-methenyltetrahydrofolate + H2O = (6R)-10-formyltetrahydrofolate + H(+). It functions in the pathway one-carbon metabolism; tetrahydrofolate interconversion. Catalyzes the oxidation of 5,10-methylenetetrahydrofolate to 5,10-methenyltetrahydrofolate and then the hydrolysis of 5,10-methenyltetrahydrofolate to 10-formyltetrahydrofolate. The polypeptide is Bifunctional protein FolD (Bartonella quintana (strain Toulouse) (Rochalimaea quintana)).